Reading from the N-terminus, the 682-residue chain is Potassium-transporting ATPase ATP-binding subunit (682 aa).

A run of 4 helical transmembrane segments spans residues 34–54 (PVMF…IAMA), 62–82 (ALFS…ANFA), 219–239 (IALT…TATL), and 254–274 (VLVA…LSAI). Residue aspartate 307 is the 4-aspartylphosphate intermediate of the active site. ATP-binding positions include aspartate 344, glutamate 348, 377–384 (FTAQSRMS), and lysine 395. Positions 518 and 522 each coordinate Mg(2+). 3 helical membrane passes run 588–608 (FAII…LNIM), 616–636 (AILS…PLAL), and 656–676 (IYGL…DLLL).

The protein belongs to the cation transport ATPase (P-type) (TC 3.A.3) family. Type IA subfamily. The system is composed of three essential subunits: KdpA, KdpB and KdpC.

The protein localises to the cell inner membrane. It carries out the reaction K(+)(out) + ATP + H2O = K(+)(in) + ADP + phosphate + H(+). In terms of biological role, part of the high-affinity ATP-driven potassium transport (or Kdp) system, which catalyzes the hydrolysis of ATP coupled with the electrogenic transport of potassium into the cytoplasm. This subunit is responsible for energy coupling to the transport system and for the release of the potassium ions to the cytoplasm. The protein is Potassium-transporting ATPase ATP-binding subunit of Escherichia coli O157:H7 (strain EC4115 / EHEC).